The sequence spans 271 residues: Arginine and glutamate-rich protein 1 (271 aa).

Basic residues-rich tracts occupy residues 1 to 29 (MGRS…RSRS) and 37 to 58 (VRKR…RSRS). Positions 1–72 (MGRSRSRSSS…AAASRRERER (72 aa)) are necessary and sufficient for RNA binding. A disordered region spans residues 1–112 (MGRSRSRSSS…EKKAEFERQR (112 aa)). Ser-58 and Ser-60 each carry phosphoserine. Thr-61 is subject to Phosphothreonine. 2 stretches are compositionally biased toward basic and acidic residues: residues 66–82 (SRRE…RIDI) and 91–112 (SSLD…ERQR). Positions 73–271 (ASSPPDRIDI…KLSFSLKTQD (199 aa)) are necessary and sufficient for transcriptional regulation. Residues Ser-74 and Ser-75 each carry the phosphoserine modification. The short motif at 170–174 (LLEEL) is the LXXLL motif 1; degenerate element. The LXXLL motif 2; degenerate motif lies at 199-203 (LERIL). Positions 236–251 (MKLEQERQRQQKEEQK) are enriched in basic and acidic residues. The interval 236 to 271 (MKLEQERQRQQKEEQKIILGKGKSRPKLSFSLKTQD) is disordered. Ser-264 bears the Phosphoserine mark.

It belongs to the ARGLU1 family. Interacts with MED1; the interaction is direct. Interacts with PUF60, U2AF2 and JMJD6; may interact with other proteins involved in RNA processing and splicing. In terms of tissue distribution, high expression levels in the neocortex, hippocampus and thalamus but low expression levels in the midbrain and hindbrain (at protein level). Ubiquitously expressed with highest expression levels in the central nervous system and low expression in uterus and pancreas.

Its subcellular location is the nucleus. The protein localises to the nucleus speckle. It is found in the chromosome. In terms of biological role, dual function regulator of gene expression; regulator of transcription and modulator of alternative splicing. General coactivator of nuclear receptor-induced gene expression, including genes activated by the glucocorticoid receptor NR3C1. Binds to a subset of pre-mRNAs and to components of the spliceosome machinery to directly modulate basal alternative splicing; involved in simple and complex cassette exon splicing events. Binds its own pre-mRNA and regulates its alternative splicing and degradation; one of the alternatively spliced products is a stable intronic sequence RNA (sisRNA) that binds the protein to regulate its ability to affect splicing. Binding of the sisRNA stimulates phase separation and localization to nuclear speckles, which may contribute to activation of nuclear receptor-induced gene expression. May also indirectly modulate alternative splicing. Regulates transcription of genes involved in heart development, neuronal cell function, protein localization and chromatin localization. Regulates splicing of genes involved in neurogenesis and chromatin organization. Essential for central nervous system development. Required for the estrogen-dependent expression of ESR1 target genes. Can act in cooperation with MED1. This Mus musculus (Mouse) protein is Arginine and glutamate-rich protein 1 (Arglu1).